The following is a 451-amino-acid chain: tRNA modification GTPase MnmE (451 aa).

(6S)-5-formyl-5,6,7,8-tetrahydrofolate-binding residues include arginine 28, glutamate 85, and lysine 124. A TrmE-type G domain is found at 220 to 373; it reads GLYTVLVGPP…LKTRLRTLLL (154 aa). Asparagine 230 is a binding site for K(+). GTP contacts are provided by residues 230 to 235, 249 to 255, and 274 to 277; these read NVGKSS, TDVPGTT, and DTAG. Position 234 (serine 234) interacts with Mg(2+). 3 residues coordinate K(+): threonine 249, valine 251, and threonine 254. Threonine 255 provides a ligand contact to Mg(2+). Lysine 451 contacts (6S)-5-formyl-5,6,7,8-tetrahydrofolate.

This sequence belongs to the TRAFAC class TrmE-Era-EngA-EngB-Septin-like GTPase superfamily. TrmE GTPase family. As to quaternary structure, homodimer. Heterotetramer of two MnmE and two MnmG subunits. K(+) serves as cofactor.

It localises to the cytoplasm. Exhibits a very high intrinsic GTPase hydrolysis rate. Involved in the addition of a carboxymethylaminomethyl (cmnm) group at the wobble position (U34) of certain tRNAs, forming tRNA-cmnm(5)s(2)U34. The protein is tRNA modification GTPase MnmE of Xylella fastidiosa (strain 9a5c).